Reading from the N-terminus, the 563-residue chain is Lengsin (563 aa).

The disordered stretch occupies residues 1–115 (MTDEGDLAQE…PNTDPTRYNA (115 aa)). A compositionally biased stretch (basic residues) spans 26-37 (SKLRRARRKVTK). 2 stretches are compositionally biased toward polar residues: residues 51–62 (ANSSEMSRNQIA) and 105–115 (SPNTDPTRYNA). The GS beta-grasp domain occupies 137–231 (NHLQFVRFEA…VICDTFTVTG (95 aa)). Residues 238 to 563 (PRYIAKRQLR…EGNKFLEYFI (326 aa)) form the GS catalytic domain.

The protein belongs to the glutamine synthetase family. As to quaternary structure, dodecamer. Interacts with BFSP2 and VIM. Expressed in lens.

In terms of biological role, may act as a component of the cytoskeleton or as a chaperone for the reorganization of intermediate filament proteins during terminal differentiation in the lens. Does not seem to have enzymatic activity. The chain is Lengsin (Lgsn) from Mus musculus (Mouse).